The following is a 186-amino-acid chain: UPF0200 protein Hbut_0338 (186 aa).

Residue 13–20 (GMPGSGKS) participates in ATP binding.

It belongs to the UPF0200 family.

In Hyperthermus butylicus (strain DSM 5456 / JCM 9403 / PLM1-5), this protein is UPF0200 protein Hbut_0338.